The chain runs to 267 residues: MPIPRKELPNVGEYVIATVKEIFDYGAYVTLDEYNGLEAYLPWSEVASRWVRNIRDVIRENQKIVVKVIRVNRRRKTVDVSLKKVPENEKRRKMLWWKRYLKASKIVELVAEKIGKSIEDAYREVVWKLEDYYGDPLLGLEEAVIRGPDALREAGIPEEWIEPLYNEALRHVKVKMVKIRGLMFLRSYESDGVERIKKILLSAKEILDKVGDNVKGRIYLLGSPRYVIEIIAPDYKEAEKVLKEILTTTEKLAKELKVEFRFERERK.

Residues 12–83 form the S1 motif domain; it reads GEYVIATVKE…RRKTVDVSLK (72 aa).

It belongs to the eIF-2-alpha family. Heterotrimer composed of an alpha, a beta and a gamma chain.

EIF-2 functions in the early steps of protein synthesis by forming a ternary complex with GTP and initiator tRNA. This chain is Translation initiation factor 2 subunit alpha, found in Staphylothermus marinus (strain ATCC 43588 / DSM 3639 / JCM 9404 / F1).